The chain runs to 156 residues: MAAGRLRILFLLLLSLHLGLGWVLDLQEAPAADELSSGKMAETGRTWKPHQGNNNVRLPRALPGLCRLWSLTLPVAELGLGYASEEKIIFRYCAGSCPQEVRTQHSLVLARLRGQGRAHGRPCCQPTSYADVTFLDDHHHWQQLPQLSAAACGCGG.

An N-terminal signal peptide occupies residues 1 to 21 (MAAGRLRILFLLLLSLHLGLG). 3 cysteine pairs are disulfide-bonded: Cys-66-Cys-124, Cys-93-Cys-152, and Cys-97-Cys-154.

Belongs to the TGF-beta family. GDNF subfamily. As to quaternary structure, homodimer; disulfide-linked. Interacts with GFRA4 coreceptor and RET: forms a 2:2:2 ternary complex composed of PSPN ligand, GFRA4 and RET receptor. As to expression, expressed at low levels in substantia nigra. Cochlea.

The protein localises to the secreted. Functionally, growth factor that exhibits neurotrophic activity on mesencephalic dopaminergic and motor neurons. Acts by binding to its coreceptor, GFRA4, leading to autophosphorylation and activation of the RET receptor. This chain is Persephin, found in Rattus norvegicus (Rat).